The chain runs to 162 residues: Endoribonuclease YbeY (162 aa).

3 residues coordinate Zn(2+): H117, H121, and H127.

This sequence belongs to the endoribonuclease YbeY family. Requires Zn(2+) as cofactor.

The protein localises to the cytoplasm. Its function is as follows. Single strand-specific metallo-endoribonuclease involved in late-stage 70S ribosome quality control and in maturation of the 3' terminus of the 16S rRNA. The polypeptide is Endoribonuclease YbeY (Francisella tularensis subsp. novicida (strain U112)).